We begin with the raw amino-acid sequence, 277 residues long: Putative glucose-6-phosphate/phosphate-translocator-like protein 1 (277 aa).

Transmembrane regions (helical) follow at residues 8 to 28, 46 to 66, 124 to 143, 153 to 173, and 230 to 250; these read VLPS…WWAL, LWLT…VSWV, MIGF…RNIF, VSVM…VTPF, and PLKH…FIYS.

The protein belongs to the TPT transporter family. GPT (TC 2.A.7.9) subfamily.

The protein resides in the membrane. In Arabidopsis thaliana (Mouse-ear cress), this protein is Putative glucose-6-phosphate/phosphate-translocator-like protein 1.